We begin with the raw amino-acid sequence, 386 residues long: ATP phosphoribosyltransferase regulatory subunit (386 aa).

Belongs to the class-II aminoacyl-tRNA synthetase family. HisZ subfamily. In terms of assembly, heteromultimer composed of HisG and HisZ subunits.

Its subcellular location is the cytoplasm. Its pathway is amino-acid biosynthesis; L-histidine biosynthesis; L-histidine from 5-phospho-alpha-D-ribose 1-diphosphate: step 1/9. Required for the first step of histidine biosynthesis. May allow the feedback regulation of ATP phosphoribosyltransferase activity by histidine. The protein is ATP phosphoribosyltransferase regulatory subunit of Ralstonia nicotianae (strain ATCC BAA-1114 / GMI1000) (Ralstonia solanacearum).